A 238-amino-acid chain; its full sequence is ATP-dependent dethiobiotin synthetase BioD (238 aa).

Residue glycine 12 to valine 17 participates in ATP binding. Threonine 16 contributes to the Mg(2+) binding site. Lysine 37 is a catalytic residue. Threonine 41 is a binding site for substrate. ATP is bound by residues aspartate 50, glutamate 109–glycine 112, glycine 170–serine 171, and proline 200–glycine 202. 2 residues coordinate Mg(2+): aspartate 50 and glutamate 109.

Belongs to the dethiobiotin synthetase family. Homodimer. Requires Mg(2+) as cofactor.

The protein localises to the cytoplasm. The catalysed reaction is (7R,8S)-7,8-diammoniononanoate + CO2 + ATP = (4R,5S)-dethiobiotin + ADP + phosphate + 3 H(+). It functions in the pathway cofactor biosynthesis; biotin biosynthesis; biotin from 7,8-diaminononanoate: step 1/2. Catalyzes a mechanistically unusual reaction, the ATP-dependent insertion of CO2 between the N7 and N8 nitrogen atoms of 7,8-diaminopelargonic acid (DAPA, also called 7,8-diammoniononanoate) to form a ureido ring. The chain is ATP-dependent dethiobiotin synthetase BioD from Frankia casuarinae (strain DSM 45818 / CECT 9043 / HFP020203 / CcI3).